We begin with the raw amino-acid sequence, 316 residues long: 4-hydroxy-3-methylbut-2-enyl diphosphate reductase (316 aa).

Residue C12 coordinates [4Fe-4S] cluster. Residues H41 and H74 each contribute to the (2E)-4-hydroxy-3-methylbut-2-enyl diphosphate site. Positions 41 and 74 each coordinate dimethylallyl diphosphate. Isopentenyl diphosphate is bound by residues H41 and H74. A [4Fe-4S] cluster-binding site is contributed by C96. H124 contacts (2E)-4-hydroxy-3-methylbut-2-enyl diphosphate. H124 is a binding site for dimethylallyl diphosphate. H124 contributes to the isopentenyl diphosphate binding site. The active-site Proton donor is the E126. T167 serves as a coordination point for (2E)-4-hydroxy-3-methylbut-2-enyl diphosphate. Position 197 (C197) interacts with [4Fe-4S] cluster. (2E)-4-hydroxy-3-methylbut-2-enyl diphosphate-binding residues include S225, S226, N227, and S269. 4 residues coordinate dimethylallyl diphosphate: S225, S226, N227, and S269. Residues S225, S226, N227, and S269 each coordinate isopentenyl diphosphate.

Belongs to the IspH family. Homodimer. It depends on [4Fe-4S] cluster as a cofactor.

It catalyses the reaction isopentenyl diphosphate + 2 oxidized [2Fe-2S]-[ferredoxin] + H2O = (2E)-4-hydroxy-3-methylbut-2-enyl diphosphate + 2 reduced [2Fe-2S]-[ferredoxin] + 2 H(+). It carries out the reaction dimethylallyl diphosphate + 2 oxidized [2Fe-2S]-[ferredoxin] + H2O = (2E)-4-hydroxy-3-methylbut-2-enyl diphosphate + 2 reduced [2Fe-2S]-[ferredoxin] + 2 H(+). The protein operates within isoprenoid biosynthesis; dimethylallyl diphosphate biosynthesis; dimethylallyl diphosphate from (2E)-4-hydroxy-3-methylbutenyl diphosphate: step 1/1. It functions in the pathway isoprenoid biosynthesis; isopentenyl diphosphate biosynthesis via DXP pathway; isopentenyl diphosphate from 1-deoxy-D-xylulose 5-phosphate: step 6/6. Catalyzes the conversion of 1-hydroxy-2-methyl-2-(E)-butenyl 4-diphosphate (HMBPP) into a mixture of isopentenyl diphosphate (IPP) and dimethylallyl diphosphate (DMAPP). Acts in the terminal step of the DOXP/MEP pathway for isoprenoid precursor biosynthesis. This chain is 4-hydroxy-3-methylbut-2-enyl diphosphate reductase, found in Escherichia coli (strain UTI89 / UPEC).